The sequence spans 264 residues: Undecaprenyl-diphosphatase (264 aa).

8 helical membrane passes run 1–21 (MEIS…FLPI), 39–59 (QGLA…LFYF), 83–103 (SLLV…GLLF), 113–133 (SGVV…FADL), 143–163 (MTIK…IPGV), 184–204 (ANFS…LESI), 220–240 (LGVI…MGII), and 243–263 (IRML…LYLF).

This sequence belongs to the UppP family.

It localises to the cell inner membrane. The enzyme catalyses di-trans,octa-cis-undecaprenyl diphosphate + H2O = di-trans,octa-cis-undecaprenyl phosphate + phosphate + H(+). Functionally, catalyzes the dephosphorylation of undecaprenyl diphosphate (UPP). Confers resistance to bacitracin. The chain is Undecaprenyl-diphosphatase from Campylobacter concisus (strain 13826).